Here is a 482-residue protein sequence, read N- to C-terminus: tRNA sulfurtransferase (482 aa).

A THUMP domain is found at 61 to 165 (QQVLEILTTT…DDKLNQILAH (105 aa)). Residues 183–184 (LI), Lys265, Gly287, and Gln296 contribute to the ATP site. Cys344 and Cys456 form a disulfide bridge. Residues 404–482 (IEEHAVVLDI…GFNNVKVYRP (79 aa)) form the Rhodanese domain. The Cysteine persulfide intermediate role is filled by Cys456.

Belongs to the ThiI family.

It localises to the cytoplasm. It catalyses the reaction [ThiI sulfur-carrier protein]-S-sulfanyl-L-cysteine + a uridine in tRNA + 2 reduced [2Fe-2S]-[ferredoxin] + ATP + H(+) = [ThiI sulfur-carrier protein]-L-cysteine + a 4-thiouridine in tRNA + 2 oxidized [2Fe-2S]-[ferredoxin] + AMP + diphosphate. The enzyme catalyses [ThiS sulfur-carrier protein]-C-terminal Gly-Gly-AMP + S-sulfanyl-L-cysteinyl-[cysteine desulfurase] + AH2 = [ThiS sulfur-carrier protein]-C-terminal-Gly-aminoethanethioate + L-cysteinyl-[cysteine desulfurase] + A + AMP + 2 H(+). It participates in cofactor biosynthesis; thiamine diphosphate biosynthesis. In terms of biological role, catalyzes the ATP-dependent transfer of a sulfur to tRNA to produce 4-thiouridine in position 8 of tRNAs, which functions as a near-UV photosensor. Also catalyzes the transfer of sulfur to the sulfur carrier protein ThiS, forming ThiS-thiocarboxylate. This is a step in the synthesis of thiazole, in the thiamine biosynthesis pathway. The sulfur is donated as persulfide by IscS. This chain is tRNA sulfurtransferase, found in Vibrio vulnificus (strain CMCP6).